A 677-amino-acid chain; its full sequence is Methionine--tRNA ligase (677 aa).

The 'HIGH' region signature appears at 15 to 25 (PYANGSIHLGH). Residues Cys-146, Cys-149, Cys-159, and Cys-162 each coordinate Zn(2+). The 'KMSKS' region signature appears at 333 to 337 (KMSKS). Lys-336 is a binding site for ATP. In terms of domain architecture, tRNA-binding spans 575-677 (DFAKVDLRVA…AGAKPGHQVK (103 aa)).

It belongs to the class-I aminoacyl-tRNA synthetase family. MetG type 1 subfamily. As to quaternary structure, homodimer. Requires Zn(2+) as cofactor.

It is found in the cytoplasm. It carries out the reaction tRNA(Met) + L-methionine + ATP = L-methionyl-tRNA(Met) + AMP + diphosphate. Functionally, is required not only for elongation of protein synthesis but also for the initiation of all mRNA translation through initiator tRNA(fMet) aminoacylation. In Escherichia coli (strain ATCC 8739 / DSM 1576 / NBRC 3972 / NCIMB 8545 / WDCM 00012 / Crooks), this protein is Methionine--tRNA ligase.